The sequence spans 187 residues: Cytokinin riboside 5'-monophosphate phosphoribohydrolase (187 aa).

Substrate is bound by residues E80, 98–99, 115–121, and T127; these read RK and GVGTLDE.

The protein belongs to the LOG family.

The catalysed reaction is N(6)-(dimethylallyl)adenosine 5'-phosphate + H2O = N(6)-dimethylallyladenine + D-ribose 5-phosphate. It catalyses the reaction 9-ribosyl-trans-zeatin 5'-phosphate + H2O = trans-zeatin + D-ribose 5-phosphate. Its function is as follows. Catalyzes the hydrolytic removal of ribose 5'-monophosphate from nitrogen N6-modified adenosines, the final step of bioactive cytokinin synthesis. The protein is Cytokinin riboside 5'-monophosphate phosphoribohydrolase of Mycobacterium marinum (strain ATCC BAA-535 / M).